The primary structure comprises 112 residues: uncharacterized protein (112 aa).

A helical transmembrane segment spans residues 85–105; the sequence is IVQLIILFAIIITNPNAIELI.

The protein belongs to the M.jannaschii MJ0023/MJ0349/MJ1072/MJ1074/MJ1107/MJECL16 family.

It localises to the membrane. This is an uncharacterized protein from Methanocaldococcus jannaschii (strain ATCC 43067 / DSM 2661 / JAL-1 / JCM 10045 / NBRC 100440) (Methanococcus jannaschii).